Reading from the N-terminus, the 122-residue chain is Phosphoribosyl-ATP pyrophosphatase (122 aa).

This sequence belongs to the PRA-PH family.

It localises to the cytoplasm. The enzyme catalyses 1-(5-phospho-beta-D-ribosyl)-ATP + H2O = 1-(5-phospho-beta-D-ribosyl)-5'-AMP + diphosphate + H(+). Its pathway is amino-acid biosynthesis; L-histidine biosynthesis; L-histidine from 5-phospho-alpha-D-ribose 1-diphosphate: step 2/9. The chain is Phosphoribosyl-ATP pyrophosphatase from Cupriavidus metallidurans (strain ATCC 43123 / DSM 2839 / NBRC 102507 / CH34) (Ralstonia metallidurans).